Reading from the N-terminus, the 318-residue chain is N-succinylornithine carbamoyltransferase (318 aa).

Residues serine 47–threonine 50, tryptophan 75, and arginine 110 contribute to the carbamoyl phosphate site. Glutamate 142 serves as a coordination point for N(2)-succinyl-L-ornithine. A carbamoyl phosphate-binding site is contributed by histidine 147–glutamine 150. 2 residues coordinate N(2)-succinyl-L-ornithine: histidine 176 and lysine 236. Residue cysteine 274 to leucine 275 participates in carbamoyl phosphate binding. Arginine 278 contacts N(2)-succinyl-L-ornithine. Arginine 302 contacts carbamoyl phosphate.

It belongs to the aspartate/ornithine carbamoyltransferase superfamily. SOTCase family. As to quaternary structure, homotrimer.

The catalysed reaction is N(2)-succinyl-L-ornithine + carbamoyl phosphate = N(2)-succinyl-L-citrulline + phosphate + H(+). Its pathway is amino-acid biosynthesis; L-arginine biosynthesis. In terms of biological role, catalyzes the transfer of the carbamoyl group from carbamoyl phosphate to the delta-amino group of N(2)-succinyl-L-ornithine to produce N(2)-succinyl-L-citrulline. Is essential for arginine biosynthesis. Has no activity with either L-ornithine or L-aspartate as substrate. Also has no detectable AOTCase activity, being unable to convert N(2)-acetyl-L-ornithine to N(2)-acetyl-L-citrulline. The chain is N-succinylornithine carbamoyltransferase from Bacteroides thetaiotaomicron (strain ATCC 29148 / DSM 2079 / JCM 5827 / CCUG 10774 / NCTC 10582 / VPI-5482 / E50).